The sequence spans 144 residues: Large ribosomal subunit protein uL15 (144 aa).

Positions 1–57 (MFLNTLRPGEGSKHAPKRVGRGIGSGLGKTGGRGHKGLKSRSGGSVKPGFEGGQMPL) are disordered. Residues 21–31 (RGIGSGLGKTG) show a composition bias toward gly residues.

Belongs to the universal ribosomal protein uL15 family. As to quaternary structure, part of the 50S ribosomal subunit.

Functionally, binds to the 23S rRNA. This Marinomonas sp. (strain MWYL1) protein is Large ribosomal subunit protein uL15.